Reading from the N-terminus, the 249-residue chain is Ribonuclease 3 (249 aa).

Positions 21–149 (VDHQPLIDAL…LLGAIYLAHG (129 aa)) constitute an RNase III domain. Glu-62 serves as a coordination point for Mg(2+). Asp-66 is a catalytic residue. Positions 135 and 138 each coordinate Mg(2+). Glu-138 is an active-site residue. Residues 176 to 244 (DWKTTLQERL…AHKAVGFLQD (69 aa)) form the DRBM domain.

The protein belongs to the ribonuclease III family. Homodimer. Requires Mg(2+) as cofactor.

The protein resides in the cytoplasm. It carries out the reaction Endonucleolytic cleavage to 5'-phosphomonoester.. Its function is as follows. Digests double-stranded RNA. Involved in the processing of primary rRNA transcript to yield the immediate precursors to the large and small rRNAs (23S and 16S). Processes some mRNAs, and tRNAs when they are encoded in the rRNA operon. Processes pre-crRNA and tracrRNA of type II CRISPR loci if present in the organism. The protein is Ribonuclease 3 of Corynebacterium diphtheriae (strain ATCC 700971 / NCTC 13129 / Biotype gravis).